Here is a 64-residue protein sequence, read N- to C-terminus: Conotoxin Cal12.4 (64 aa).

A signal peptide spans 1-21 (MKLTCMLVVLLLVLPFGDLIA).

It belongs to the conotoxin O1 superfamily. In terms of processing, contains 4 disulfide bonds. Expressed by the venom duct.

The protein localises to the secreted. In terms of biological role, probable neurotoxin. The chain is Conotoxin Cal12.4 from Californiconus californicus (California cone).